The chain runs to 338 residues: Ketol-acid reductoisomerase (NADP(+)) (338 aa).

Residues 1-181 enclose the KARI N-terminal Rossmann domain; sequence MQIFYDKDCD…GGGRTGIIET (181 aa). Residues 24 to 27, R47, S50, S52, and 82 to 85 contribute to the NADP(+) site; these read YGSQ and DEFQ. H107 is a catalytic residue. G133 lines the NADP(+) pocket. A KARI C-terminal knotted domain is found at 182-327; it reads SFREETETDL…SKLRAMMPWI (146 aa). The Mg(2+) site is built by D190, E194, E226, and E230. Residue S251 coordinates substrate.

Belongs to the ketol-acid reductoisomerase family. It depends on Mg(2+) as a cofactor.

The enzyme catalyses (2R)-2,3-dihydroxy-3-methylbutanoate + NADP(+) = (2S)-2-acetolactate + NADPH + H(+). It carries out the reaction (2R,3R)-2,3-dihydroxy-3-methylpentanoate + NADP(+) = (S)-2-ethyl-2-hydroxy-3-oxobutanoate + NADPH + H(+). It participates in amino-acid biosynthesis; L-isoleucine biosynthesis; L-isoleucine from 2-oxobutanoate: step 2/4. Its pathway is amino-acid biosynthesis; L-valine biosynthesis; L-valine from pyruvate: step 2/4. In terms of biological role, involved in the biosynthesis of branched-chain amino acids (BCAA). Catalyzes an alkyl-migration followed by a ketol-acid reduction of (S)-2-acetolactate (S2AL) to yield (R)-2,3-dihydroxy-isovalerate. In the isomerase reaction, S2AL is rearranged via a Mg-dependent methyl migration to produce 3-hydroxy-3-methyl-2-ketobutyrate (HMKB). In the reductase reaction, this 2-ketoacid undergoes a metal-dependent reduction by NADPH to yield (R)-2,3-dihydroxy-isovalerate. The polypeptide is Ketol-acid reductoisomerase (NADP(+)) (Acinetobacter baylyi (strain ATCC 33305 / BD413 / ADP1)).